A 725-amino-acid chain; its full sequence is Protein ECM27 (725 aa).

The next 12 helical transmembrane spans lie at 21–41, 119–139, 157–177, 178–198, 397–417, 439–459, 470–490, 526–546, 559–579, 621–641, 668–688, and 704–724; these read VTFIVPSLFHIIIAFVLLGIC, VLGACGIILCIVEGSIFIIMS, LLFSLAAMCVMSYVSLMNQVT, VLNCLLMAFLYAFYLVVKLTF, ISDAIFSIITVPFFIIFKLSC, LPIILLFIQSITAPFLLCSIL, LVYLFPLILAMALILLLTAFI, IQIIFLAIGIINIIIWISLLA, ILGLSKAILGLTIFAWGNSVG, LNSMGGIGFSGLVSMLFIGAF, FIVSCVFIILQIILLLLFFGG, and GISMCGLWALATLINILLELF.

The protein belongs to the Ca(2+):cation antiporter (CaCA) (TC 2.A.19) family.

Its subcellular location is the membrane. The protein is Protein ECM27 (ECM27) of Saccharomyces cerevisiae (strain ATCC 204508 / S288c) (Baker's yeast).